Here is a 413-residue protein sequence, read N- to C-terminus: Tyrosine--tRNA ligase (413 aa).

Residue Tyr34 coordinates L-tyrosine. The 'HIGH' region signature appears at 39-48 (CTAQSLHVGN). Residues Tyr171 and Gln175 each coordinate L-tyrosine. Residues 231–235 (KMGKT) carry the 'KMSKS' region motif. Lys234 provides a ligand contact to ATP. In terms of domain architecture, S4 RNA-binding spans 346–411 (IPITELLVTI…GKKCHILVKI (66 aa)).

The protein belongs to the class-I aminoacyl-tRNA synthetase family. TyrS type 1 subfamily. Homodimer.

The protein localises to the cytoplasm. The catalysed reaction is tRNA(Tyr) + L-tyrosine + ATP = L-tyrosyl-tRNA(Tyr) + AMP + diphosphate + H(+). Functionally, catalyzes the attachment of tyrosine to tRNA(Tyr) in a two-step reaction: tyrosine is first activated by ATP to form Tyr-AMP and then transferred to the acceptor end of tRNA(Tyr). The sequence is that of Tyrosine--tRNA ligase from Orientia tsutsugamushi (strain Boryong) (Rickettsia tsutsugamushi).